The sequence spans 546 residues: Chaperonin GroEL 5 (546 aa).

ATP is bound by residues 30 to 33, K51, 87 to 91, G415, and D495; these read TLGP and DGTTT.

Belongs to the chaperonin (HSP60) family. In terms of assembly, forms a cylinder of 14 subunits composed of two heptameric rings stacked back-to-back. Interacts with the co-chaperonin GroES.

The protein resides in the cytoplasm. The enzyme catalyses ATP + H2O + a folded polypeptide = ADP + phosphate + an unfolded polypeptide.. Its function is as follows. Together with its co-chaperonin GroES, plays an essential role in assisting protein folding. The GroEL-GroES system forms a nano-cage that allows encapsulation of the non-native substrate proteins and provides a physical environment optimized to promote and accelerate protein folding. The protein is Chaperonin GroEL 5 of Paraburkholderia xenovorans (strain LB400).